The chain runs to 452 residues: UPF0210 protein Hore_14430 (452 aa).

This sequence belongs to the UPF0210 family. As to quaternary structure, homodimer.

This chain is UPF0210 protein Hore_14430, found in Halothermothrix orenii (strain H 168 / OCM 544 / DSM 9562).